Here is a 202-residue protein sequence, read N- to C-terminus: Orotate phosphoribosyltransferase (202 aa).

113 to 121 lines the 5-phospho-alpha-D-ribose 1-diphosphate pocket; that stretch reads EDIITTGGS. 2 residues coordinate orotate: Thr-117 and Arg-145.

Belongs to the purine/pyrimidine phosphoribosyltransferase family. PyrE subfamily. In terms of assembly, homodimer. Mg(2+) is required as a cofactor.

The catalysed reaction is orotidine 5'-phosphate + diphosphate = orotate + 5-phospho-alpha-D-ribose 1-diphosphate. It functions in the pathway pyrimidine metabolism; UMP biosynthesis via de novo pathway; UMP from orotate: step 1/2. Its function is as follows. Catalyzes the transfer of a ribosyl phosphate group from 5-phosphoribose 1-diphosphate to orotate, leading to the formation of orotidine monophosphate (OMP). The sequence is that of Orotate phosphoribosyltransferase from Sulfurimonas denitrificans (strain ATCC 33889 / DSM 1251) (Thiomicrospira denitrificans (strain ATCC 33889 / DSM 1251)).